The primary structure comprises 544 residues: Chaperonin GroEL (544 aa).

ATP contacts are provided by residues Thr30–Pro33, Lys51, Asp87–Thr91, Gly415, Asn479–Ala481, and Asp495.

This sequence belongs to the chaperonin (HSP60) family. As to quaternary structure, forms a cylinder of 14 subunits composed of two heptameric rings stacked back-to-back. Interacts with the co-chaperonin GroES.

The protein resides in the cytoplasm. The enzyme catalyses ATP + H2O + a folded polypeptide = ADP + phosphate + an unfolded polypeptide.. Together with its co-chaperonin GroES, plays an essential role in assisting protein folding. The GroEL-GroES system forms a nano-cage that allows encapsulation of the non-native substrate proteins and provides a physical environment optimized to promote and accelerate protein folding. This chain is Chaperonin GroEL, found in Francisella tularensis subsp. holarctica (strain FTNF002-00 / FTA).